Reading from the N-terminus, the 417-residue chain is Inactive cytochrome P450 76AD1 (417 aa).

A helical membrane pass occupies residues alanine 4–phenylalanine 24.

The protein belongs to the cytochrome P450 family.

It localises to the membrane. The protein operates within pigment biosynthesis; betalain biosynthesis. Inactive cytochrome unable to convert L-DOPA to cyclo-DOPA in the betalain pathway and producing a yellow mutant phenotype. A frameshift replaces 108 amino acids of the active protein found in red beets (AC I3PFJ5) with 27 new residues followed by a stop codon. The sequence is that of Inactive cytochrome P450 76AD1 from Beta vulgaris (Sugar beet).